The following is a 154-amino-acid chain: MNVIEGKMTQDGIKVGIVVARFNEFITSKLLGGAKDGLVRHDVPEENIDVAWVPGAFEIPLIAKKMAKSRKYDAIICLGAVIRGATSHYDYVCNEVSKGIASVSLESEIPVMFGVVTTENIEQAIERAGTKAGNKGYDCALGAIEMINLVRQIG.

5-amino-6-(D-ribitylamino)uracil is bound by residues Phe22, 56–58, and 80–82; these read AFE and AVI. 85-86 contacts (2S)-2-hydroxy-3-oxobutyl phosphate; sequence AT. His88 functions as the Proton donor in the catalytic mechanism. Residue Phe113 coordinates 5-amino-6-(D-ribitylamino)uracil. Arg127 is a binding site for (2S)-2-hydroxy-3-oxobutyl phosphate.

The protein belongs to the DMRL synthase family.

It carries out the reaction (2S)-2-hydroxy-3-oxobutyl phosphate + 5-amino-6-(D-ribitylamino)uracil = 6,7-dimethyl-8-(1-D-ribityl)lumazine + phosphate + 2 H2O + H(+). It participates in cofactor biosynthesis; riboflavin biosynthesis; riboflavin from 2-hydroxy-3-oxobutyl phosphate and 5-amino-6-(D-ribitylamino)uracil: step 1/2. Catalyzes the formation of 6,7-dimethyl-8-ribityllumazine by condensation of 5-amino-6-(D-ribitylamino)uracil with 3,4-dihydroxy-2-butanone 4-phosphate. This is the penultimate step in the biosynthesis of riboflavin. The protein is 6,7-dimethyl-8-ribityllumazine synthase of Agathobacter rectalis (strain ATCC 33656 / DSM 3377 / JCM 17463 / KCTC 5835 / VPI 0990) (Eubacterium rectale).